Here is a 42-residue protein sequence, read N- to C-terminus: Protein Tat (42 aa).

An interaction with human CREBBP region spans residues 1–24 (MEPVDPNLEPWNHPGSQPKTACNQ). The interval 22–37 (CNQCYCKKCSYHCLVC) is cysteine-rich. At Lys-28 the chain carries N6-acetyllysine; by host PCAF.

Belongs to the lentiviruses Tat family. As to quaternary structure, interacts with host CCNT1. Associates with the P-TEFb complex composed at least of Tat, P-TEFb (CDK9 and CCNT1), TAR RNA, RNA Pol II. Recruits the HATs CREBBP, TAF1/TFIID, EP300, PCAF and GCN5L2. Interacts with host KAT5/Tip60; this interaction targets the latter to degradation. Interacts with the host deacetylase SIRT1. Interacts with host capping enzyme RNGTT; this interaction stimulates RNGTT. Binds to host KDR, and to the host integrins ITGAV/ITGB3 and ITGA5/ITGB1. Interacts with host KPNB1/importin beta-1 without previous binding to KPNA1/importin alpha-1. Interacts with EIF2AK2. Interacts with host nucleosome assembly protein NAP1L1; this interaction may be required for the transport of Tat within the nucleus, since the two proteins interact at the nuclear rim. Interacts with host C1QBP/SF2P32; this interaction involves lysine-acetylated Tat. Interacts with the host chemokine receptors CCR2, CCR3 and CXCR4. Interacts with host DPP4/CD26; this interaction may trigger an anti-proliferative effect. Interacts with host LDLR. Interacts with the host extracellular matrix metalloproteinase MMP1. Interacts with host PRMT6; this interaction mediates Tat's methylation. Interacts with, and is ubiquitinated by MDM2/Hdm2. Interacts with host PSMC3 and HTATIP2. Interacts with STAB1; this interaction may overcome SATB1-mediated repression of IL2 and IL2RA (interleukin) in T cells by binding to the same domain than HDAC1. Interacts (when acetylated) with human CDK13, thereby increasing HIV-1 mRNA splicing and promoting the production of the doubly spliced HIV-1 protein Nef. Interacts with host TBP; this interaction modulates the activity of transcriptional pre-initiation complex. Interacts with host RELA. Interacts with host PLSCR1; this interaction negatively regulates Tat transactivation activity by altering its subcellular distribution. Phosphorylated by EIF2AK2 on serine and threonine residues adjacent to the basic region important for TAR RNA binding and function. Phosphorylation of Tat by EIF2AK2 is dependent on the prior activation of EIF2AK2 by dsRNA. Post-translationally, asymmetrical arginine methylation by host PRMT6 seems to diminish the transactivation capacity of Tat and affects the interaction with host CCNT1. In terms of processing, polyubiquitination by host MDM2 does not target Tat to degradation, but activates its transactivation function and fosters interaction with CCNT1 and TAR RNA.

The protein resides in the host nucleus. It is found in the host nucleolus. Its subcellular location is the host cytoplasm. It localises to the secreted. In terms of biological role, transcriptional activator that increases RNA Pol II processivity, thereby increasing the level of full-length viral transcripts. Recognizes a hairpin structure at the 5'-LTR of the nascent viral mRNAs referred to as the transactivation responsive RNA element (TAR) and recruits the cyclin T1-CDK9 complex (P-TEFb complex) that will in turn hyperphosphorylate the RNA polymerase II to allow efficient elongation. The CDK9 component of P-TEFb and other Tat-activated kinases hyperphosphorylate the C-terminus of RNA Pol II that becomes stabilized and much more processive. Other factors such as HTATSF1/Tat-SF1, SUPT5H/SPT5, and HTATIP2 are also important for Tat's function. Besides its effect on RNA Pol II processivity, Tat induces chromatin remodeling of proviral genes by recruiting the histone acetyltransferases (HATs) CREBBP, EP300 and PCAF to the chromatin. This also contributes to the increase in proviral transcription rate, especially when the provirus integrates in transcriptionally silent region of the host genome. To ensure maximal activation of the LTR, Tat mediates nuclear translocation of NF-kappa-B by interacting with host RELA. Through its interaction with host TBP, Tat may also modulate transcription initiation. Tat can reactivate a latently infected cell by penetrating in it and transactivating its LTR promoter. In the cytoplasm, Tat is thought to act as a translational activator of HIV-1 mRNAs. Functionally, extracellular circulating Tat can be endocytosed by surrounding uninfected cells via the binding to several surface receptors such as CD26, CXCR4, heparan sulfate proteoglycans (HSPG) or LDLR. Neurons are rarely infected, but they internalize Tat via their LDLR. Through its interaction with nuclear HATs, Tat is potentially able to control the acetylation-dependent cellular gene expression. Modulates the expression of many cellular genes involved in cell survival, proliferation or in coding for cytokines or cytokine receptors. Tat plays a role in T-cell and neurons apoptosis. Tat induced neurotoxicity and apoptosis probably contribute to neuroAIDS. Circulating Tat also acts as a chemokine-like and/or growth factor-like molecule that binds to specific receptors on the surface of the cells, affecting many cellular pathways. In the vascular system, Tat binds to ITGAV/ITGB3 and ITGA5/ITGB1 integrins dimers at the surface of endothelial cells and competes with bFGF for heparin-binding sites, leading to an excess of soluble bFGF. In Human immunodeficiency virus type 1 group M subtype C (isolate ETH2220) (HIV-1), this protein is Protein Tat.